The primary structure comprises 338 residues: Glyceraldehyde-3-phosphate dehydrogenase (338 aa).

NAD(+) contacts are provided by residues Arg-12–Ile-13, Asp-34, and Arg-79. D-glyceraldehyde 3-phosphate-binding positions include Ser-150–Thr-152, Thr-181, Thr-210–Gly-211, and Arg-233. The active-site Nucleophile is the Cys-151. Residue Asn-315 participates in NAD(+) binding.

It belongs to the glyceraldehyde-3-phosphate dehydrogenase family. Homotetramer.

The protein localises to the cytoplasm. The enzyme catalyses D-glyceraldehyde 3-phosphate + phosphate + NAD(+) = (2R)-3-phospho-glyceroyl phosphate + NADH + H(+). It participates in carbohydrate degradation; glycolysis; pyruvate from D-glyceraldehyde 3-phosphate: step 1/5. The polypeptide is Glyceraldehyde-3-phosphate dehydrogenase (gpd1) (Hypocrea atroviridis (Trichoderma atroviride)).